The sequence spans 283 residues: tRNA-cytidine(32) 2-sulfurtransferase (283 aa).

The PP-loop motif motif lies at 37–42; that stretch reads SGGKDS. [4Fe-4S] cluster is bound by residues Cys-112, Cys-115, and Cys-203.

Belongs to the TtcA family. As to quaternary structure, homodimer. Mg(2+) serves as cofactor. [4Fe-4S] cluster is required as a cofactor.

It localises to the cytoplasm. The enzyme catalyses cytidine(32) in tRNA + S-sulfanyl-L-cysteinyl-[cysteine desulfurase] + AH2 + ATP = 2-thiocytidine(32) in tRNA + L-cysteinyl-[cysteine desulfurase] + A + AMP + diphosphate + H(+). It functions in the pathway tRNA modification. Its function is as follows. Catalyzes the ATP-dependent 2-thiolation of cytidine in position 32 of tRNA, to form 2-thiocytidine (s(2)C32). The sulfur atoms are provided by the cysteine/cysteine desulfurase (IscS) system. This Legionella pneumophila (strain Paris) protein is tRNA-cytidine(32) 2-sulfurtransferase.